Here is a 185-residue protein sequence, read N- to C-terminus: CASP-like protein 2C2 (185 aa).

Residues 1–22 (MAAAARVSEVKAEGLLRGACTA) lie on the Cytoplasmic side of the membrane. Residues 23 to 43 (LAAAAALLVGLSTQTETVLLV) form a helical membrane-spanning segment. The Extracellular segment spans residues 44–53 (RKKATVKDVQ). The chain crosses the membrane as a helical span at residues 54–74 (ALWVLAMAAAAAAGYHLLQLL). Over 75-104 (KCLYLGRVGGARPCRRSSRALAWTCLLLDK) the chain is Cytoplasmic. Residues 105-125 (ACAYTTFATTVAAAQACVVAL) traverse the membrane as a helical segment. Residues 126–146 (DGAHALQWTKLCNIYTRFCEQ) are Extracellular-facing. Residues 147 to 167 (VAGSLVLGMLAAVGTAVLSAA) traverse the membrane as a helical segment. Topologically, residues 168–185 (SARNVFRHYASLETYAAH) are cytoplasmic.

The protein belongs to the Casparian strip membrane proteins (CASP) family. Homodimer and heterodimers.

The protein localises to the cell membrane. The chain is CASP-like protein 2C2 from Zea mays (Maize).